Consider the following 122-residue polypeptide: Ribosome-binding factor A (122 aa).

Belongs to the RbfA family. Monomer. Binds 30S ribosomal subunits, but not 50S ribosomal subunits or 70S ribosomes.

It localises to the cytoplasm. Its function is as follows. One of several proteins that assist in the late maturation steps of the functional core of the 30S ribosomal subunit. Associates with free 30S ribosomal subunits (but not with 30S subunits that are part of 70S ribosomes or polysomes). Required for efficient processing of 16S rRNA. May interact with the 5'-terminal helix region of 16S rRNA. This Pelobacter propionicus (strain DSM 2379 / NBRC 103807 / OttBd1) protein is Ribosome-binding factor A.